The following is a 372-amino-acid chain: Pyrimidine monooxygenase RutA (372 aa).

FMN contacts are provided by residues 57–58, asparagine 123, glutamate 132, 148–149, and serine 198; these read IK and RY.

The protein belongs to the NtaA/SnaA/DszA monooxygenase family. RutA subfamily.

It catalyses the reaction uracil + FMNH2 + NADH + O2 = (Z)-3-ureidoacrylate + FMN + NAD(+) + H2O + H(+). The catalysed reaction is thymine + FMNH2 + NADH + O2 = (Z)-2-methylureidoacrylate + FMN + NAD(+) + H2O + H(+). Catalyzes the pyrimidine ring opening between N-3 and C-4 by an unusual flavin hydroperoxide-catalyzed mechanism, adding oxygen atoms in the process to yield ureidoacrylate peracid, that immediately reacts with FMN forming ureidoacrylate and FMN-N(5)-oxide. The FMN-N(5)-oxide reacts spontaneously with NADH to produce FMN. Requires the flavin reductase RutF to regenerate FMN in vivo. This chain is Pyrimidine monooxygenase RutA, found in Methylorubrum extorquens (strain PA1) (Methylobacterium extorquens).